The primary structure comprises 657 residues: tRNA 5-methylaminomethyl-2-thiouridine biosynthesis bifunctional protein MnmC (657 aa).

A tRNA (mnm(5)s(2)U34)-methyltransferase region spans residues Met-1–Ala-239. Residues Ile-263–Ala-657 are FAD-dependent cmnm(5)s(2)U34 oxidoreductase.

In the N-terminal section; belongs to the methyltransferase superfamily. tRNA (mnm(5)s(2)U34)-methyltransferase family. This sequence in the C-terminal section; belongs to the DAO family. Requires FAD as cofactor.

The protein localises to the cytoplasm. The enzyme catalyses 5-aminomethyl-2-thiouridine(34) in tRNA + S-adenosyl-L-methionine = 5-methylaminomethyl-2-thiouridine(34) in tRNA + S-adenosyl-L-homocysteine + H(+). Catalyzes the last two steps in the biosynthesis of 5-methylaminomethyl-2-thiouridine (mnm(5)s(2)U) at the wobble position (U34) in tRNA. Catalyzes the FAD-dependent demodification of cmnm(5)s(2)U34 to nm(5)s(2)U34, followed by the transfer of a methyl group from S-adenosyl-L-methionine to nm(5)s(2)U34, to form mnm(5)s(2)U34. The sequence is that of tRNA 5-methylaminomethyl-2-thiouridine biosynthesis bifunctional protein MnmC from Burkholderia mallei (strain SAVP1).